Reading from the N-terminus, the 344-residue chain is Plastoglobule-localized metallopeptidase 48, chloroplastic (344 aa).

The transit peptide at 1–47 (MAVSVSAPVLSLCYNQSGELSRSLGYRLPKKVGFSSGRRSVSYIGFG) directs the protein to the chloroplast. 2 helical membrane-spanning segments follow: residues 102-122 (LLGSMTEQIMLLENIGTSVLV) and 169-189 (FIVVHTSLIELLTSAELQAVL). His191 contributes to the Zn(2+) binding site. The active site involves Glu192. His195 contributes to the Zn(2+) binding site. A helical membrane pass occupies residues 201 to 221 (GVWLTFANILTLGAYTVPAFG). Glu240 is a binding site for Zn(2+). Residues 256–272 (VVVSVLMKLAGGCPSIA) traverse the membrane as a helical segment.

Belongs to the peptidase M48 family. M48D subfamily. In terms of assembly, interacts with plastoglobule (PG) core proteins ABC1K3, PES1 and CCD4. It depends on Zn(2+) as a cofactor. As to expression, mostly expressed in flowers (e.g. sepals, petals and stamen), seeds, leaves and cotyledons.

It localises to the plastid. Its subcellular location is the chloroplast. The protein localises to the plastoglobule. The protein resides in the chloroplast membrane. Its function is as follows. Metalloendopeptidase with a Zn-dependent proteolytic activity and substrate cleavage upstream of hydrophobic residues. Positive regulator of senescence, probably by degrading CCD4, thus participating in the controlled removal of carotenoids from the thylakoid membrane during the senescence process. This Arabidopsis thaliana (Mouse-ear cress) protein is Plastoglobule-localized metallopeptidase 48, chloroplastic.